Here is a 105-residue protein sequence, read N- to C-terminus: ESAT-6-like protein EsxB (105 aa).

Positions 1–23 (MSQGFKTEADVMRNTAHRVDDTN) are disordered. Over residues 7–21 (TEADVMRNTAHRVDD) the composition is skewed to basic and acidic residues.

The protein belongs to the WXG100 family. CFP-10 subfamily. Forms a tight 1:1 complex with EsxB.

The chain is ESAT-6-like protein EsxB from Corynebacterium diphtheriae (strain ATCC 700971 / NCTC 13129 / Biotype gravis).